The primary structure comprises 192 residues: UPF0312 protein PputW619_0484 (192 aa).

An N-terminal signal peptide occupies residues 1-23 (MLKKTFAALALGTALLSAGQAMA).

It belongs to the UPF0312 family. Type 1 subfamily.

The protein localises to the periplasm. The polypeptide is UPF0312 protein PputW619_0484 (Pseudomonas putida (strain W619)).